A 276-amino-acid chain; its full sequence is Tryptophan synthase alpha chain (276 aa).

Residues glutamate 55 and aspartate 66 each act as proton acceptor in the active site.

The protein belongs to the TrpA family. Tetramer of two alpha and two beta chains.

It catalyses the reaction (1S,2R)-1-C-(indol-3-yl)glycerol 3-phosphate + L-serine = D-glyceraldehyde 3-phosphate + L-tryptophan + H2O. It participates in amino-acid biosynthesis; L-tryptophan biosynthesis; L-tryptophan from chorismate: step 5/5. Functionally, the alpha subunit is responsible for the aldol cleavage of indoleglycerol phosphate to indole and glyceraldehyde 3-phosphate. The protein is Tryptophan synthase alpha chain of Gloeobacter violaceus (strain ATCC 29082 / PCC 7421).